A 584-amino-acid chain; its full sequence is ETHYLENE INSENSITIVE 3-like 1 protein (584 aa).

The stretch at 41–74 (YTDDEMDVDELEKRMWRDKMRLKRLKEQQSKCKE) forms a coiled coil. Over residues 67–80 (EQQSKCKEGVDGSK) the composition is skewed to basic and acidic residues. Disordered stretches follow at residues 67–93 (EQQS…RKKM) and 565–584 (EGMG…SIWF).

It belongs to the EIN3 family. As to quaternary structure, acts as a homodimer to bind the primary ethylene response element.

It localises to the nucleus. Probable transcription factor acting as a positive regulator in the ethylene response pathway. Could bind the primary ethylene response element present in the ETHYLENE-RESPONSE-FACTOR1 promoter. This chain is ETHYLENE INSENSITIVE 3-like 1 protein (EIL1), found in Arabidopsis thaliana (Mouse-ear cress).